Here is a 318-residue protein sequence, read N- to C-terminus: Transaldolase (318 aa).

K132 (schiff-base intermediate with substrate) is an active-site residue.

Belongs to the transaldolase family. Type 1 subfamily. Homodimer.

It localises to the cytoplasm. It catalyses the reaction D-sedoheptulose 7-phosphate + D-glyceraldehyde 3-phosphate = D-erythrose 4-phosphate + beta-D-fructose 6-phosphate. It participates in carbohydrate degradation; pentose phosphate pathway; D-glyceraldehyde 3-phosphate and beta-D-fructose 6-phosphate from D-ribose 5-phosphate and D-xylulose 5-phosphate (non-oxidative stage): step 2/3. Transaldolase is important for the balance of metabolites in the pentose-phosphate pathway. The polypeptide is Transaldolase (Shewanella sp. (strain ANA-3)).